The following is a 376-amino-acid chain: Erythronate-4-phosphate dehydrogenase (376 aa).

S45 and T66 together coordinate substrate. Residues 126–127, D146, T174, 201–203, and D227 contribute to the NAD(+) site; these read QV and ASR. R203 is a catalytic residue. The active site involves E232. The active-site Proton donor is H249. G252 is an NAD(+) binding site. Y253 is a binding site for substrate.

This sequence belongs to the D-isomer specific 2-hydroxyacid dehydrogenase family. PdxB subfamily. As to quaternary structure, homodimer.

Its subcellular location is the cytoplasm. The enzyme catalyses 4-phospho-D-erythronate + NAD(+) = (R)-3-hydroxy-2-oxo-4-phosphooxybutanoate + NADH + H(+). The protein operates within cofactor biosynthesis; pyridoxine 5'-phosphate biosynthesis; pyridoxine 5'-phosphate from D-erythrose 4-phosphate: step 2/5. In terms of biological role, catalyzes the oxidation of erythronate-4-phosphate to 3-hydroxy-2-oxo-4-phosphonooxybutanoate. The sequence is that of Erythronate-4-phosphate dehydrogenase from Ectopseudomonas mendocina (strain ymp) (Pseudomonas mendocina).